A 427-amino-acid chain; its full sequence is Dihydroorotase (427 aa).

The Zn(2+) site is built by H60 and H62. Substrate contacts are provided by residues 62–64 (HLR) and N94. Zn(2+) contacts are provided by D151, H178, and H231. Substrate is bound at residue N277. D304 is a binding site for Zn(2+). The active site involves D304. Substrate contacts are provided by residues H308 and 322–323 (FG).

It belongs to the metallo-dependent hydrolases superfamily. DHOase family. Class I DHOase subfamily. The cofactor is Zn(2+).

It carries out the reaction (S)-dihydroorotate + H2O = N-carbamoyl-L-aspartate + H(+). Its pathway is pyrimidine metabolism; UMP biosynthesis via de novo pathway; (S)-dihydroorotate from bicarbonate: step 3/3. Catalyzes the reversible cyclization of carbamoyl aspartate to dihydroorotate. This is Dihydroorotase from Pelotomaculum thermopropionicum (strain DSM 13744 / JCM 10971 / SI).